The following is a 208-amino-acid chain: High frequency lysogenization protein HflD homolog (208 aa).

The protein belongs to the HflD family.

The protein resides in the cytoplasm. Its subcellular location is the cell inner membrane. The protein is High frequency lysogenization protein HflD homolog of Yersinia pestis bv. Antiqua (strain Nepal516).